The chain runs to 458 residues: Monomethylamine methyltransferase MtmB1 (458 aa).

Pyl202 is a non-standard amino acid (pyrrolysine).

The protein belongs to the monomethylamine methyltransferase family. In terms of assembly, can form a complex with MtmC.

It catalyses the reaction Co(I)-[methylamine-specific corrinoid protein] + methylamine + H(+) = methyl-Co(III)-[methylamine-specific corrinoid protein] + NH4(+). Its pathway is one-carbon metabolism; methanogenesis from methylamine. In terms of biological role, catalyzes the transfer of the methyl group from monomethylamine to the corrinoid cofactor of MtmC. The chain is Monomethylamine methyltransferase MtmB1 (mtmB1) from Methanosarcina acetivorans (strain ATCC 35395 / DSM 2834 / JCM 12185 / C2A).